A 93-amino-acid chain; its full sequence is MITIKDVEHISWLASIRVSEEEREELVAQFNTILDYFQQLDEVDTEGVEPTYRVVDLANVFREDVPRDSLTQDEALRNAPRREEGYFRSPRIV.

The protein belongs to the GatC family. As to quaternary structure, heterotrimer of A, B and C subunits.

It catalyses the reaction L-glutamyl-tRNA(Gln) + L-glutamine + ATP + H2O = L-glutaminyl-tRNA(Gln) + L-glutamate + ADP + phosphate + H(+). The enzyme catalyses L-aspartyl-tRNA(Asn) + L-glutamine + ATP + H2O = L-asparaginyl-tRNA(Asn) + L-glutamate + ADP + phosphate + 2 H(+). In terms of biological role, allows the formation of correctly charged Asn-tRNA(Asn) or Gln-tRNA(Gln) through the transamidation of misacylated Asp-tRNA(Asn) or Glu-tRNA(Gln) in organisms which lack either or both of asparaginyl-tRNA or glutaminyl-tRNA synthetases. The reaction takes place in the presence of glutamine and ATP through an activated phospho-Asp-tRNA(Asn) or phospho-Glu-tRNA(Gln). The protein is Aspartyl/glutamyl-tRNA(Asn/Gln) amidotransferase subunit C of Methanothrix thermoacetophila (strain DSM 6194 / JCM 14653 / NBRC 101360 / PT) (Methanosaeta thermophila).